The chain runs to 250 residues: Pyrroloquinoline-quinone synthase (250 aa).

This sequence belongs to the PqqC family.

The catalysed reaction is 6-(2-amino-2-carboxyethyl)-7,8-dioxo-1,2,3,4,7,8-hexahydroquinoline-2,4-dicarboxylate + 3 O2 = pyrroloquinoline quinone + 2 H2O2 + 2 H2O + H(+). The protein operates within cofactor biosynthesis; pyrroloquinoline quinone biosynthesis. In terms of biological role, ring cyclization and eight-electron oxidation of 3a-(2-amino-2-carboxyethyl)-4,5-dioxo-4,5,6,7,8,9-hexahydroquinoline-7,9-dicarboxylic-acid to PQQ. This Pseudomonas aeruginosa (strain LESB58) protein is Pyrroloquinoline-quinone synthase.